The following is a 411-amino-acid chain: Acetylornithine aminotransferase, mitochondrial (411 aa).

At Lys262 the chain carries N6-(pyridoxal phosphate)lysine.

It belongs to the class-III pyridoxal-phosphate-dependent aminotransferase family. Pyridoxal 5'-phosphate serves as cofactor.

Its subcellular location is the mitochondrion matrix. It carries out the reaction N(2)-acetyl-L-ornithine + 2-oxoglutarate = N-acetyl-L-glutamate 5-semialdehyde + L-glutamate. Its pathway is amino-acid biosynthesis; L-arginine biosynthesis; N(2)-acetyl-L-ornithine from L-glutamate: step 4/4. This chain is Acetylornithine aminotransferase, mitochondrial (ARG8), found in Yarrowia lipolytica (strain CLIB 122 / E 150) (Yeast).